The sequence spans 64 residues: Large ribosomal subunit protein bL35 (64 aa).

A compositionally biased stretch (basic residues) spans 1-26; that stretch reads MPKMKSHRGASKRFKRTASGKLKRGR. Disordered regions lie at residues 1-28 and 33-52; these read MPKM…GRAY and FGNK…MVSS.

It belongs to the bacterial ribosomal protein bL35 family.

This chain is Large ribosomal subunit protein bL35, found in Exiguobacterium sibiricum (strain DSM 17290 / CCUG 55495 / CIP 109462 / JCM 13490 / 255-15).